The chain runs to 119 residues: Large ribosomal subunit protein uL18 (119 aa).

Belongs to the universal ribosomal protein uL18 family. As to quaternary structure, part of the 50S ribosomal subunit; part of the 5S rRNA/L5/L18/L25 subcomplex. Contacts the 5S and 23S rRNAs.

In terms of biological role, this is one of the proteins that bind and probably mediate the attachment of the 5S RNA into the large ribosomal subunit, where it forms part of the central protuberance. This is Large ribosomal subunit protein uL18 from Ruegeria sp. (strain TM1040) (Silicibacter sp.).